A 234-amino-acid chain; its full sequence is Leucyl/phenylalanyl-tRNA--protein transferase (234 aa).

Belongs to the L/F-transferase family.

Its subcellular location is the cytoplasm. The enzyme catalyses N-terminal L-lysyl-[protein] + L-leucyl-tRNA(Leu) = N-terminal L-leucyl-L-lysyl-[protein] + tRNA(Leu) + H(+). It carries out the reaction N-terminal L-arginyl-[protein] + L-leucyl-tRNA(Leu) = N-terminal L-leucyl-L-arginyl-[protein] + tRNA(Leu) + H(+). It catalyses the reaction L-phenylalanyl-tRNA(Phe) + an N-terminal L-alpha-aminoacyl-[protein] = an N-terminal L-phenylalanyl-L-alpha-aminoacyl-[protein] + tRNA(Phe). In terms of biological role, functions in the N-end rule pathway of protein degradation where it conjugates Leu, Phe and, less efficiently, Met from aminoacyl-tRNAs to the N-termini of proteins containing an N-terminal arginine or lysine. This is Leucyl/phenylalanyl-tRNA--protein transferase from Dechloromonas aromatica (strain RCB).